A 112-amino-acid chain; its full sequence is DNA-binding protein TON_1102 (112 aa).

The protein belongs to the PDCD5 family.

The polypeptide is DNA-binding protein TON_1102 (Thermococcus onnurineus (strain NA1)).